A 540-amino-acid chain; its full sequence is Putative serine protease F56F10.1 (540 aa).

The first 16 residues, 1 to 16, serve as a signal peptide directing secretion; the sequence is MLRNLLLLLLPLLIEA. Residues Asn58 and Asn87 are each glycosylated (N-linked (GlcNAc...) asparagine). The active-site Charge relay system is the Ser182. Asn270, Asn300, Asn317, Asn343, Asn441, and Asn449 each carry an N-linked (GlcNAc...) asparagine glycan. The active-site Charge relay system is Asp453. Asn475 carries N-linked (GlcNAc...) asparagine glycosylation. The active-site Charge relay system is His479.

This sequence belongs to the peptidase S28 family.

This is Putative serine protease F56F10.1 from Caenorhabditis elegans.